The following is a 209-amino-acid chain: Octanoyltransferase (209 aa).

In terms of domain architecture, BPL/LPL catalytic spans 30–209 (DHEPEIIYLV…IQTEFNKIFK (180 aa)). Residues 69–76 (RGGKFTFH), 143–145 (AIG), and 156–158 (GVA) each bind substrate. Residue cysteine 174 is the Acyl-thioester intermediate of the active site.

The protein belongs to the LipB family.

The protein resides in the cytoplasm. It carries out the reaction octanoyl-[ACP] + L-lysyl-[protein] = N(6)-octanoyl-L-lysyl-[protein] + holo-[ACP] + H(+). The protein operates within protein modification; protein lipoylation via endogenous pathway; protein N(6)-(lipoyl)lysine from octanoyl-[acyl-carrier-protein]: step 1/2. Catalyzes the transfer of endogenously produced octanoic acid from octanoyl-acyl-carrier-protein onto the lipoyl domains of lipoate-dependent enzymes. Lipoyl-ACP can also act as a substrate although octanoyl-ACP is likely to be the physiological substrate. The polypeptide is Octanoyltransferase (Rickettsia africae (strain ESF-5)).